A 252-amino-acid chain; its full sequence is Uridylate kinase (252 aa).

ATP is bound at residue 27 to 30 (KLGG). Glycine 68 provides a ligand contact to UMP. Residues glycine 69 and arginine 73 each coordinate ATP. UMP is bound by residues aspartate 88 and 149 to 156 (MGLPYFST). ATP-binding residues include tyrosine 182 and aspartate 185.

It belongs to the UMP kinase family. In terms of assembly, homohexamer.

The protein resides in the cytoplasm. The catalysed reaction is UMP + ATP = UDP + ADP. The protein operates within pyrimidine metabolism; CTP biosynthesis via de novo pathway; UDP from UMP (UMPK route): step 1/1. Its activity is regulated as follows. Inhibited by UTP. Catalyzes the reversible phosphorylation of UMP to UDP. The protein is Uridylate kinase of Mycobacterium sp. (strain JLS).